Reading from the N-terminus, the 430-residue chain is Adenylosuccinate synthetase (430 aa).

Residues 13 to 19 (GDEGKGK) and 41 to 43 (GHT) contribute to the GTP site. Asp14 functions as the Proton acceptor in the catalytic mechanism. Asp14 and Gly41 together coordinate Mg(2+). IMP-binding positions include 14-17 (DEGK), 39-42 (NAGH), Thr130, Arg144, Gln225, Thr240, and Arg304. Residue His42 is the Proton donor of the active site. Residue 300–306 (ASTGRPR) participates in substrate binding. GTP-binding positions include Arg306, 332-334 (KLD), and 414-416 (STG).

The protein belongs to the adenylosuccinate synthetase family. Homodimer. It depends on Mg(2+) as a cofactor.

It is found in the cytoplasm. It carries out the reaction IMP + L-aspartate + GTP = N(6)-(1,2-dicarboxyethyl)-AMP + GDP + phosphate + 2 H(+). It functions in the pathway purine metabolism; AMP biosynthesis via de novo pathway; AMP from IMP: step 1/2. In terms of biological role, plays an important role in the de novo pathway of purine nucleotide biosynthesis. Catalyzes the first committed step in the biosynthesis of AMP from IMP. This Xylella fastidiosa (strain M12) protein is Adenylosuccinate synthetase.